The primary structure comprises 1102 residues: MHRRSSGSPVEDDAEDSLSSRIPPEPSNGPNVVDTPEKSRSQVARTGTSIDLRRDATGASTPRSRNSSMWRTPPSSSMTSNPPDCKSSSVMMPLASQRLPIEASPDHQRRYRPSRLRSPWPCSILTAFTTLVASIFLFFILRSFALRQTGGDGCGVPVMSPTFIRMVGFDTEHTRFASKYNLYLYREGGVDPYSQENLGLNGVPVLFLPGNAGSYRQVRSLAAEASRHYYDVVRHDEDRLNAGTRSLDFFMIDFNEDMAAFHGQTLLDQAEYVNEAVAYILSLYHDPRRSRRDPELPDPSAVVLVGHSMGGIVARTALTMTNYQANSVNTIVTMSAPHAKPPVSFDSDIVQTYKQINDYWREAYSQTWANDNPLWHVTLISIAGGSRDTVVPSDYASISSLVPETHGFTVFTSTIPDVWIGMDHLSITWCDQFRKAIIKSLFEVVDVRRATQTKPRAERMRIFKKWYLTGMETVAERTLPRKGVSGKKFTLLTNQQFDKSGDHGSLEVLFCSVFPLQNGKPATAFSMNMDFSGGTSGSTRLACKNAAEDGIHLPASTPSSKRPYDRVQPFSYLQYDLEDLAEHQFVAVVDKANSPTKGFVLAEFSDSSDSVIRARLGLGSLLSAGLKVRLPANRPMLTELQIPAVHSSLLDYRLKIIRKNHGQQQELFAPLLRQSVADPHESKFFVNVKNVNVNLHGLAPFMPPPLREQATLGGVSFHLWTDPSCDSTIDISLSVDIAGSLGELVMRYRTVFAAFPLLVVALVMRKQFQVYDETGYFITFAEGLDSALRSSLPMLLLAMSLLASSLATSTKLPPTDDPFHWRTNSTESPIDFTKNDLLLGSQDAFFWFLVPIFGLISVGVCLVINYVALALIFLLTSIYGFLRSKSGYIRRDEKGNLPIFSSASPRRRLVNSAILLALVSTVIPYQFAYMVACIVQLATSVRASWHAKEAKSTTHYNFANFAYSIFLLMLWILPINALVLLVWAHNLVVHWFMPFSSHHNVLSIMPFVLLVEAMTTGTMIPRVTTRFKHVTSMLFFFIAIYSAIYGVSYAYLLHHLTNILAAWLVGIYFSASGFSLSRLWRVLEGDEAVQNPASGSHTKKKP.

Positions 1–90 are disordered; it reads MHRRSSGSPV…NPPDCKSSSV (90 aa). The span at 58–70 shows a compositional bias: polar residues; sequence GASTPRSRNSSMW. Residue asparagine 66 is glycosylated (N-linked (GlcNAc...) asparagine). A compositionally biased stretch (low complexity) spans 72–83; the sequence is TPPSSSMTSNPP. The helical transmembrane segment at 121–141 threads the bilayer; the sequence is PCSILTAFTTLVASIFLFFIL. Residue serine 308 is part of the active site. The next 2 helical transmembrane spans lie at 744–764 and 790–810; these read LVMR…ALVM and SSLP…ATST. A glycan (N-linked (GlcNAc...) asparagine) is linked at asparagine 824. The next 6 membrane-spanning stretches (helical) occupy residues 867–887, 914–934, 964–984, 1001–1021, 1033–1053, and 1056–1076; these read VALA…SKSG, ILLA…VACI, SIFL…LVWA, VLSI…TMIP, MLFF…AYLL, and LTNI…GFSL.

The protein belongs to the GPI inositol-deacylase family.

Its subcellular location is the endoplasmic reticulum membrane. Its function is as follows. Involved in inositol deacylation of GPI-anchored proteins which plays important roles in the quality control and ER-associated degradation of GPI-anchored proteins. The chain is GPI inositol-deacylase (bst1) from Aspergillus oryzae (strain ATCC 42149 / RIB 40) (Yellow koji mold).